Reading from the N-terminus, the 529-residue chain is CRISPR-associated endodeoxyribonuclease Cas12f1 (529 aa).

Positions Met-1 to Trp-95 are zinc finger domain (ZF). The Zn(2+) site is built by Cys-50, His-53, Cys-69, and Cys-72. The segment at Gln-96–Ile-192 is recognition domain (REC). Residues Pro-193–Lys-312 are wedge domain (WED). The tract at residues Ile-313–Ile-321 is linker. The tract at residues Ile-322–Lys-473 is ruvC-I. Residues Asp-326 and Glu-422 contribute to the active site. A target nucleic acid-binding (TNB) region spans residues Thr-474–Asn-508. The Zn(2+) site is built by Cys-475 and Cys-478. Arg-490 is a catalytic residue. Residues Cys-500 and Cys-503 each contribute to the Zn(2+) site. Positions Ala-509–Pro-529 are ruvC-II. Residue Asp-510 is part of the active site.

The protein belongs to the CRISPR-associated endonuclease Cas12f family. As to quaternary structure, an asymmetric homodimer. Guide RNA is probably required for dimerization. Mg(2+) is required as a cofactor. The cofactor is Zn(2+).

Its activity is regulated as follows. Target ssDNA cleavage is inhibited by EDTA. Activity is maximal with 5-50 mM NaCl, is less efficient at higher NaCl concentrations. Its function is as follows. CRISPR (clustered regularly interspaced short palindromic repeat), is an adaptive immune system that provides protection against mobile genetic elements (viruses, transposable elements and conjugative plasmids). CRISPR clusters contain sequences complementary to antecedent mobile elements and target invading nucleic acids. CRISPR clusters are transcribed and processed into CRISPR RNA (crRNA), which requires a trans-encoded small RNA (tracrRNA), but not this protein (in vitro). Upon expression in E.coli of this protein, a mini CRISPR array and the probable tracrRNA, the protein associates with both RNAs. The mini system is not active in E.coli against phiX174 phage, nor is it active in protection against transformation by foreign plasmids. In vitro the purified protein-tracrRNA-crRNA complex cleaves ssDNA complementary to the crRNA; target cleavage requires both tracrRNA and crRNA, but not a protospacer adjacent motif (PAM). The tracrRNA-crRNA can be replaced by a single guide RNA (sgRNA). 2-nucleotide mismatches in the middle of the crRNA:DNA heteroduplex decrease cleavage. Cleavage occurs just downstream of the heteroduplex. Activation of this protein results in non-specific ssDNA degradation in vitro. In vitro and in E.coli (coexpressed with sgRNA) has dsDNA endonuclease activity, recognizing the 5' PAM sequence TTTR; both sgRNA and a PAM are required for activity. Cleaves the target strand 24 and the nontarget strand 22 bases upstream of the PAM (respectively), resulting in 5' overhangs. The 2 monomers interact differently with the sgRNA and target DNA. Mutagenesis of a dimeric construct shows that one of the RuvC monomers probably cleaves both DNA strands. This is CRISPR-associated endodeoxyribonuclease Cas12f1 from Uncultured archaeon.